Reading from the N-terminus, the 526-residue chain is MSKAPLALLSVSNKSNIVEFAQGLIKAGFGLLSTGGTFRLLTEHNVAVTEVSDYTGFPEMMDGRVKTLHPKIHGGILGRRGTDDAVMSEHAIERIDLVVVNLYPFAETIARSDVTMNDAIENIDIGGPTMVRSAAKNHAHVGIVTDPADYTRVLEALGDGTTLTHALRYDLAVKAFEHTAQYDGMIANFLGSRVNENQEPEDFSRTFNVQLEKVQDLRYGENPHQKAAFYVENNALKSKQASIATAKQLQGKALSYNNIADTDAALECVKAFSTPACVIVKHANPCGVAVDTDQVAAYRTAFSTDPESSFGGIIAFNRPLTLAAAKAIIDNQFVEVIIAPSIEDGVLEATASKKNVRVLVCGDLPAPELRDRQLDYKRVNGGLLVQEQDLGLITANDLKIVTDVQPTEAQIADLLFSWNVAKYVKSNAIVYAKGQRTIGVGAGQMSRVNSARIAAIKAEHAGLATEGAVMASDAFFPFRDGIDNAAEVGIAAIIQPGGSMRDDETIAAANEHGIAMVFTGMRHFRH.

The MGS-like domain occupies 1 to 145 (MSKAPLALLS…KNHAHVGIVT (145 aa)).

This sequence belongs to the PurH family.

It carries out the reaction (6R)-10-formyltetrahydrofolate + 5-amino-1-(5-phospho-beta-D-ribosyl)imidazole-4-carboxamide = 5-formamido-1-(5-phospho-D-ribosyl)imidazole-4-carboxamide + (6S)-5,6,7,8-tetrahydrofolate. The enzyme catalyses IMP + H2O = 5-formamido-1-(5-phospho-D-ribosyl)imidazole-4-carboxamide. The protein operates within purine metabolism; IMP biosynthesis via de novo pathway; 5-formamido-1-(5-phospho-D-ribosyl)imidazole-4-carboxamide from 5-amino-1-(5-phospho-D-ribosyl)imidazole-4-carboxamide (10-formyl THF route): step 1/1. Its pathway is purine metabolism; IMP biosynthesis via de novo pathway; IMP from 5-formamido-1-(5-phospho-D-ribosyl)imidazole-4-carboxamide: step 1/1. The chain is Bifunctional purine biosynthesis protein PurH from Psychrobacter cryohalolentis (strain ATCC BAA-1226 / DSM 17306 / VKM B-2378 / K5).